We begin with the raw amino-acid sequence, 150 residues long: UPF0756 membrane protein PM0771 (150 aa).

4 consecutive transmembrane segments (helical) span residues leucine 12–leucine 34, histidine 52–glycine 72, leucine 79–tryptophan 99, and isoleucine 123–leucine 143.

Belongs to the UPF0756 family.

Its subcellular location is the cell membrane. This chain is UPF0756 membrane protein PM0771, found in Pasteurella multocida (strain Pm70).